A 511-amino-acid chain; its full sequence is LEM domain-containing protein 2 (511 aa).

A2 carries the N-acetylalanine modification. The LEM domain maps to 2-42 (AGLSDLELRRELQALGFQPGPITDTTRNVYRNKLRRLRGEA). 2 disordered regions span residues 18 to 110 (FQPG…SDAS) and 128 to 206 (GLSY…AGRT). The segment covering 38-80 (LRGEARLRDDERLREDAGPREDAGPRGPERQREEARLREEAPL) has biased composition (basic and acidic residues). Positions 80–112 (LRARPAASVLRSEPWPLSPSPPAPSAASDASGP) are interaction with lamin A/C complexes. The segment at 80-141 (LRARPAASVL…PPHAGPGPLR (62 aa)) is required for nuclear retention and interaction with LMNA isoform C. Low complexity-rich tracts occupy residues 81–94 (RARPAASVLRSEPW) and 172–183 (APPSASARPHSA). 2 helical membrane passes run 221–241 (LLLWASLGLLLGFLAILWVKM) and 385–405 (VTHVLIFFWCLAFLWGLLILL). The winged-Helix (WH) stretch occupies residues 403-511 (ILLKYRWRKL…KPSSFSDSER (109 aa)). Phosphoserine occurs at positions 505, 507, and 509.

In terms of assembly, interacts (via N-terminus) with LMNA isoform C (via C-terminus) (in vitro). Interacts (via LEM domain) with BANF1. Interacts (via C-terminus) with CHMP7. Interacts (via N-terminus) with tubulin; the interaction causes microtubule bundling and stabilization (in vitro). Post-translationally, phosphorylated; strongly phosphorylated in mitosis compared to G1/S. In terms of tissue distribution, ubiquitously expressed, including liver, brain, heart, skeletal muscle, lung, testis, spleen, kidney and white adipose tissue.

The protein localises to the nucleus inner membrane. It is found in the nucleus envelope. The protein resides in the cytoplasm. Its subcellular location is the cytoskeleton. It localises to the spindle. Its function is as follows. Nuclear lamina-associated inner nuclear membrane protein that is involved in nuclear structure organization and maintenance of nuclear envelope (NE) integrity and NE reformation after mitosis. Plays a role as transmembrane adapter for the endosomal sorting complexes required for transport (ESCRT), and is thereby involved in ESCRT-mediated NE reformation. Promotes ESCRT-mediated NE closure by recruiting CHMP7 and downstream ESCRT-III proteins IST1/CHMP8 and CHMP2A to the reforming NE during anaphase. During nuclear reassembly, condenses into a liquid-like coating around microtubule spindles and coassembles with CHMP7 to form a macromolecular O-ring seal at the confluence between membranes, chromatin, and the spindle to facilitate early nuclear sealing. Plays a role in the organization of heterochromatin associated with the NE and in the maintenance of NE organization under mechanical stress. Required for embryonic development and is involved in regulation of several signaling pathways such as MAPK and AKT. Required for myoblast differentiation involving regulation of ERK signaling. Essential for cardiac homeostasis and proper heart function. The chain is LEM domain-containing protein 2 (Lemd2) from Mus musculus (Mouse).